Consider the following 169-residue polypeptide: Cilia- and flagella-associated protein HOATZ (169 aa).

Disordered stretches follow at residues M1–P21, S52–N89, and K144–D169. Residues S75–N89 are compositionally biased toward polar residues.

This sequence belongs to the HOATZ family.

The protein resides in the cytoplasm. The protein localises to the cell projection. It is found in the cilium. Its function is as follows. Required for motile ciliogenesis and flagellar genesis by mediating the maturation of the glycolytic enzyme ENO4. The chain is Cilia- and flagella-associated protein HOATZ from Homo sapiens (Human).